We begin with the raw amino-acid sequence, 548 residues long: Palmitoyltransferase pfa3 (548 aa).

Over 1–32 (MMATLATSPPTSPTWPKRRPRAWALRCERYCC) the chain is Cytoplasmic. A helical transmembrane segment spans residues 33–53 (AAATYFPLAFVYSLTTWAVYV). Residues 54-70 (EASIGLKPSRSPWIGLP) are Extracellular-facing. Residues 71–91 (TSILGVLLYICLNASYTVAVF) form a helical membrane-spanning segment. Residues 92–173 (TDPGSPLTTG…ATCVGLYNYK (82 aa)) lie on the Cytoplasmic side of the membrane. A DHHC domain is found at 130-180 (RYCKKCQCPKPDRAHHCSTCKRCVLKMDHHCPWLATCVGLYNYKAFLLFLI). The helical transmembrane segment at 174 to 194 (AFLLFLIYTSLFCWVDFAVSA) threads the bilayer. Topologically, residues 195–215 (TWIWTEVFNDAPYLETMLPVN) are extracellular. A helical transmembrane segment spans residues 216 to 236 (VVLLAILGGIIGLVLTGFTAW). The Cytoplasmic portion of the chain corresponds to 237 to 548 (HISLAVRGMT…EDSSEWRDWD (312 aa)). Disordered regions lie at residues 313–339 (RAEE…DQLT) and 463–548 (NPHQ…RDWD). Positions 508 to 535 (DPLNQQSVPANGAVNQLQKANEASSATT) are enriched in polar residues. A compositionally biased stretch (basic and acidic residues) spans 536–548 (NRREDSSEWRDWD).

Belongs to the DHHC palmitoyltransferase family. PFA3 subfamily. Post-translationally, autopalmitoylated.

Its subcellular location is the vacuole membrane. It carries out the reaction L-cysteinyl-[protein] + hexadecanoyl-CoA = S-hexadecanoyl-L-cysteinyl-[protein] + CoA. In terms of biological role, palmitoyltransferase specific for VAC8. Palmitoylates VAC8 at one or more of its N-terminal cysteine residues, which is required for its proper membrane localization. In Aspergillus fumigatus (strain ATCC MYA-4609 / CBS 101355 / FGSC A1100 / Af293) (Neosartorya fumigata), this protein is Palmitoyltransferase pfa3 (pfa3).